A 454-amino-acid chain; its full sequence is Tubulin beta-2 chain (454 aa).

GTP is bound by residues Gln-11, Glu-69, Ser-138, Gly-142, Thr-143, Gly-144, Asn-204, and Asn-226. Position 69 (Glu-69) interacts with Mg(2+). A disordered region spans residues 426-454; that stretch reads QEASVDDEAMEDDAEAEGGAGQNEAVEEF. Acidic residues predominate over residues 429 to 441; the sequence is SVDDEAMEDDAEA.

The protein belongs to the tubulin family. In terms of assembly, dimer of alpha and beta chains. A typical microtubule is a hollow water-filled tube with an outer diameter of 25 nm and an inner diameter of 15 nM. Alpha-beta heterodimers associate head-to-tail to form protofilaments running lengthwise along the microtubule wall with the beta-tubulin subunit facing the microtubule plus end conferring a structural polarity. Microtubules usually have 13 protofilaments but different protofilament numbers can be found in some organisms and specialized cells. Mg(2+) is required as a cofactor.

The protein resides in the cytoplasm. It localises to the cytoskeleton. Its subcellular location is the spindle. It is found in the nucleus. In terms of biological role, tubulin is the major constituent of microtubules, a cylinder consisting of laterally associated linear protofilaments composed of alpha- and beta-tubulin heterodimers. Microtubules grow by the addition of GTP-tubulin dimers to the microtubule end, where a stabilizing cap forms. Below the cap, tubulin dimers are in GDP-bound state, owing to GTPase activity of alpha-tubulin. Functionally, this is the major beta tubulin of mitotic spindle. This Physarum polycephalum (Slime mold) protein is Tubulin beta-2 chain (BETC).